Consider the following 80-residue polypeptide: MGMRMMFTVFLSVVLATTVVSTPSDRASDGRNAAVHERQKELVPSVITTCCGYDPGTMCPPCRCTNSCPTKPKKPGRRND.

The first 21 residues, 1 to 21 (MGMRMMFTVFLSVVLATTVVS), serve as a signal peptide directing secretion. A propeptide spanning residues 22–38 (TPSDRASDGRNAAVHER) is cleaved from the precursor. A Pyrrolidone carboxylic acid modification is found at Gln39. O-linked (HexNAc...) serine glycosylation is present at Ser45. Pro55, Pro60, Pro61, Pro69, Pro72, and Pro75 each carry 4-hydroxyproline. Position 75 is a proline amide (Pro75). The propeptide occupies 76–80 (GRRND).

The protein belongs to the conotoxin A superfamily. In terms of processing, contains 3 disulfide bonds. O-linked glycan consists of Hex3-HexNAc2 pentasaccharide. Expressed by the venom duct.

It localises to the secreted. Neurotoxin with probable activity on sodium channel. Induces intense repetitive firing of the frog neuromuscular junction, leading to a tetanic contracture in muscle fiber (spastic paralysis). In vivo, shows the same effect as the whole venom when injected on fish prey. The polypeptide is Conotoxin SIVB (Conus striatus (Striated cone)).